Here is a 65-residue protein sequence, read N- to C-terminus: Bucain (65 aa).

Intrachain disulfides connect Cys3/Cys24, Cys17/Cys42, Cys46/Cys57, and Cys58/Cys63.

Belongs to the three-finger toxin family. Short-chain subfamily. Orphan group III sub-subfamily. As to expression, expressed by the venom gland.

Its subcellular location is the secreted. The chain is Bucain from Bungarus candidus (Malayan krait).